Consider the following 484-residue polypeptide: Cobyric acid synthase (484 aa).

A GATase cobBQ-type domain is found at 248–435 (VLKVIVPVLP…LHGLFEGSQS (188 aa)). C329 serves as the catalytic Nucleophile. H427 is an active-site residue.

It belongs to the CobB/CobQ family. CobQ subfamily.

It functions in the pathway cofactor biosynthesis; adenosylcobalamin biosynthesis. Catalyzes amidations at positions B, D, E, and G on adenosylcobyrinic A,C-diamide. NH(2) groups are provided by glutamine, and one molecule of ATP is hydrogenolyzed for each amidation. This chain is Cobyric acid synthase, found in Pseudomonas putida (strain ATCC 700007 / DSM 6899 / JCM 31910 / BCRC 17059 / LMG 24140 / F1).